A 572-amino-acid chain; its full sequence is MQSSMLLRVRALPKTASVLSRTKTATYATYKVPRIDNEPNKHYAAGSPDRKALQEALARTQRNAPLSVPLVIAGKEVKSSSSLTQSNPASHGPVATYSNATAKDVQAAIESALEARKSWASTPFADRASVFLKAADLISTKYRYDVMALTMHGQGKNAWQAEIDSAAELCDFFRFGVKYAEDLYAQQPVHHAPGVWNRVEYRPLEGFVYAISPFNFTAIGGNLAGAPALMGNVVVWKPSPSAIASNWLVHQILLEAGLPKNVIQFVPGEAEEVTKTVLDHPDFAALHFTGSTNVFRNLYGQISTRVAAGKYRSYPRIVGETGGKNFHLIHKSADIRNAAVQTVRGAFEYQGQKCSATSRVYVASSIADSFLEQVASEAKSLKVGPPSDFTNFCGPVIHEASFTKLAKVIDEAKNDPELELLAGGSYDSSKGWYIQPTVYRTTNPDHPLLTRELFGPILVVYAYPDATEADFARIAQKIDATGEYGLTGSVFAQDREALAVANDVLRNAAGNFYINCKSTGAVVGQQPFGGARASGTNDKAGSGNLLSRFVSLRSIKEEFVPTYKVAYPSNEA.

Position 300 to 305 (300 to 305 (GQISTR)) interacts with NAD(+). Catalysis depends on glutamate 320, which acts as the Proton acceptor. Catalysis depends on cysteine 354, which acts as the Nucleophile.

This sequence belongs to the aldehyde dehydrogenase family.

The protein localises to the mitochondrion matrix. It carries out the reaction L-glutamate 5-semialdehyde + NAD(+) + H2O = L-glutamate + NADH + 2 H(+). It functions in the pathway amino-acid degradation; L-proline degradation into L-glutamate; L-glutamate from L-proline: step 2/2. The sequence is that of Delta-1-pyrroline-5-carboxylate dehydrogenase, mitochondrial (prnC) from Emericella nidulans (strain FGSC A4 / ATCC 38163 / CBS 112.46 / NRRL 194 / M139) (Aspergillus nidulans).